The following is a 267-amino-acid chain: Phosphate import ATP-binding protein PstB (267 aa).

In terms of domain architecture, ABC transporter spans 21 to 262 (IAIRNLEFYY…PSKQQTEDYI (242 aa)). Residue 53–60 (GPSGCGKS) participates in ATP binding.

It belongs to the ABC transporter superfamily. Phosphate importer (TC 3.A.1.7) family. The complex is composed of two ATP-binding proteins (PstB), two transmembrane proteins (PstC and PstA) and a solute-binding protein (PstS).

Its subcellular location is the cell inner membrane. It carries out the reaction phosphate(out) + ATP + H2O = ADP + 2 phosphate(in) + H(+). Functionally, part of the ABC transporter complex PstSACB involved in phosphate import. Responsible for energy coupling to the transport system. The chain is Phosphate import ATP-binding protein PstB from Xylella fastidiosa (strain 9a5c).